The primary structure comprises 342 residues: Holliday junction branch migration complex subunit RuvB (342 aa).

The tract at residues 1–179 (MTNILSPEKS…FGIPMRLNFY (179 aa)) is large ATPase domain (RuvB-L). Residues Ile-18, Arg-19, Gly-60, Lys-63, Thr-64, Thr-65, 126–128 (EDF), Arg-169, Tyr-179, and Arg-216 each bind ATP. Thr-64 is a Mg(2+) binding site. The tract at residues 180-250 (NTEELKKVLN…ISDFGLKRLE (71 aa)) is small ATPAse domain (RuvB-S). The interval 253-342 (RIGLDSNDYR…HQFNIFNENE (90 aa)) is head domain (RuvB-H). DNA is bound by residues Arg-289, Arg-308, and Arg-313.

Belongs to the RuvB family. As to quaternary structure, homohexamer. Forms an RuvA(8)-RuvB(12)-Holliday junction (HJ) complex. HJ DNA is sandwiched between 2 RuvA tetramers; dsDNA enters through RuvA and exits via RuvB. An RuvB hexamer assembles on each DNA strand where it exits the tetramer. Each RuvB hexamer is contacted by two RuvA subunits (via domain III) on 2 adjacent RuvB subunits; this complex drives branch migration. In the full resolvosome a probable DNA-RuvA(4)-RuvB(12)-RuvC(2) complex forms which resolves the HJ.

The protein resides in the cytoplasm. It carries out the reaction ATP + H2O = ADP + phosphate + H(+). The RuvA-RuvB-RuvC complex processes Holliday junction (HJ) DNA during genetic recombination and DNA repair, while the RuvA-RuvB complex plays an important role in the rescue of blocked DNA replication forks via replication fork reversal (RFR). RuvA specifically binds to HJ cruciform DNA, conferring on it an open structure. The RuvB hexamer acts as an ATP-dependent pump, pulling dsDNA into and through the RuvAB complex. RuvB forms 2 homohexamers on either side of HJ DNA bound by 1 or 2 RuvA tetramers; 4 subunits per hexamer contact DNA at a time. Coordinated motions by a converter formed by DNA-disengaged RuvB subunits stimulates ATP hydrolysis and nucleotide exchange. Immobilization of the converter enables RuvB to convert the ATP-contained energy into a lever motion, pulling 2 nucleotides of DNA out of the RuvA tetramer per ATP hydrolyzed, thus driving DNA branch migration. The RuvB motors rotate together with the DNA substrate, which together with the progressing nucleotide cycle form the mechanistic basis for DNA recombination by continuous HJ branch migration. Branch migration allows RuvC to scan DNA until it finds its consensus sequence, where it cleaves and resolves cruciform DNA. The chain is Holliday junction branch migration complex subunit RuvB from Rickettsia peacockii (strain Rustic).